A 221-amino-acid chain; its full sequence is Octanoyltransferase (221 aa).

One can recognise a BPL/LPL catalytic domain in the interval 14-202; it reads GVRPDTLWFL…MLGARNAPHP (189 aa). Residues 54–61, 128–130, and 141–143 each bind substrate; these read RGGLLTYH, SIG, and GFA. Residue Cys-159 is the Acyl-thioester intermediate of the active site. The disordered stretch occupies residues 197-221; it reads RNAPHPPAPNLSSGDLGTGTRAGRT.

The protein belongs to the LipB family.

It is found in the cytoplasm. The catalysed reaction is octanoyl-[ACP] + L-lysyl-[protein] = N(6)-octanoyl-L-lysyl-[protein] + holo-[ACP] + H(+). Its pathway is protein modification; protein lipoylation via endogenous pathway; protein N(6)-(lipoyl)lysine from octanoyl-[acyl-carrier-protein]: step 1/2. In terms of biological role, catalyzes the transfer of endogenously produced octanoic acid from octanoyl-acyl-carrier-protein onto the lipoyl domains of lipoate-dependent enzymes. Lipoyl-ACP can also act as a substrate although octanoyl-ACP is likely to be the physiological substrate. This chain is Octanoyltransferase, found in Frankia casuarinae (strain DSM 45818 / CECT 9043 / HFP020203 / CcI3).